A 503-amino-acid chain; its full sequence is 2-(3-amino-3-carboxypropyl)histidine synthase subunit 2 (503 aa).

[4Fe-4S] cluster-binding residues include cysteine 93, cysteine 114, and cysteine 334. Residues 464 to 503 are disordered; that stretch reads GLDSVDEGEGPSKLYEGQSGIAKGYVGEGSKEKIQRDFGK. Positions 492-503 are enriched in basic and acidic residues; that stretch reads GSKEKIQRDFGK.

The protein belongs to the DPH1/DPH2 family. DPH2 subfamily. In terms of assembly, component of the 2-(3-amino-3-carboxypropyl)histidine synthase complex composed of dph1, dph2, dph3 and a NADH-dependent reductase, predominantly cbr1. Requires [4Fe-4S] cluster as cofactor.

It localises to the cytoplasm. It participates in protein modification; peptidyl-diphthamide biosynthesis. Required for the first step of diphthamide biosynthesis, a post-translational modification of histidine which occurs in elongation factor 2. Dph1 and dph2 transfer a 3-amino-3-carboxypropyl (ACP) group from S-adenosyl-L-methionine (SAM) to a histidine residue, the reaction is assisted by a reduction system comprising dph3 and a NADH-dependent reductase, predominantly cbr1. Facilitates the reduction of the catalytic iron-sulfur cluster found in the dph1 subunit. This chain is 2-(3-amino-3-carboxypropyl)histidine synthase subunit 2, found in Schizosaccharomyces pombe (strain 972 / ATCC 24843) (Fission yeast).